The following is a 490-amino-acid chain: MHHCKRYRSPEPDPYLSYRWKRRRSYSREHEGRLRYPSRREPPPRRSRSRSHDRIPYQRRYREHRDSDTYRCEERSPSFGEDCYGSSRSRHRRRSRERAPYRTRKHAHHCHKRRTRSCSSASSRSQQSSKRSSRSVEDDKEGHLVCRIGDWLQERYEIVGNLGEGTFGKVVECLDHARGKSQVALKIIRNVGKYREAARLEINVLKKIKEKDKENKFLCVLMSDWFNFHGHMCIAFELLGKNTFEFLKENNFQPYPLPHVRHMAYQLCHALRFLHENQLTHTDLKPENILFVNSEFETLYNEHKSCEEKSVKNTSIRVADFGSATFDHEHHTTIVATRHYRPPEVILELGWAQPCDVWSIGCILFEYYRGFTLFQTHENREHLVMMEKILGPIPSHMIHRTRKQKYFYKGGLVWDENSSDGRYVKENCKPLKSYMLQDSLEHVQLFDLMRRMLEFDPAQRITLAEALLHPFFAGLTPEERSFHSSRNPSR.

Positions 1 to 138 (MHHCKRYRSP…SKRSSRSVED (138 aa)) are disordered. Residue Tyr-7 is modified to Phosphotyrosine. Phosphoserine is present on residues Ser-9, Ser-49, Ser-51, Ser-67, Ser-76, and Ser-78. Composition is skewed to basic and acidic residues over residues 26-56 (YSRE…DRIP) and 63-76 (EHRD…EERS). Positions 88 to 116 (RSRHRRRSRERAPYRTRKHAHHCHKRRTR) are enriched in basic residues. Over residues 117–130 (SCSSASSRSQQSSK) the composition is skewed to low complexity. The residue at position 135 (Ser-135) is a Phosphoserine. A Protein kinase domain is found at 156–472 (YEIVGNLGEG…LAEALLHPFF (317 aa)). ATP-binding positions include 162 to 170 (LGEGTFGKV) and Lys-186. The Proton acceptor role is filled by Asp-283.

The protein belongs to the protein kinase superfamily. CMGC Ser/Thr protein kinase family. Lammer subfamily. Autophosphorylates on all three types of residues. Present at high levels in testis and ovary. In testis, expression is restricted to elongated, maturing spermatozoa. Also present in spleen, brain, lung and liver (at protein level).

Its subcellular location is the nucleus. It is found in the cytoplasm. The protein localises to the cytoplasmic vesicle. The protein resides in the secretory vesicle. It localises to the acrosome. It catalyses the reaction L-seryl-[protein] + ATP = O-phospho-L-seryl-[protein] + ADP + H(+). The catalysed reaction is L-threonyl-[protein] + ATP = O-phospho-L-threonyl-[protein] + ADP + H(+). The enzyme catalyses L-tyrosyl-[protein] + ATP = O-phospho-L-tyrosyl-[protein] + ADP + H(+). Leucettine L41 inhibits its kinase activity and affects the regulation of alternative splicing mediated by phosphorylation of SR proteins. Functionally, dual specificity kinase acting on both serine/threonine and tyrosine-containing substrates. Phosphorylates serine- and arginine-rich (SR) proteins of the spliceosomal complex. May be a constituent of a network of regulatory mechanisms that enable SR proteins to control RNA splicing and can cause redistribution of SR proteins from speckles to a diffuse nucleoplasmic distribution. Phosphorylates SRSF1 and SRSF3. Regulates the alternative splicing of tissue factor (F3) pre-mRNA in endothelial cells. The protein is Dual specificity protein kinase CLK3 of Mus musculus (Mouse).